A 71-amino-acid chain; its full sequence is Cell division protein ZapB (71 aa).

A coiled-coil region spans residues 5-67; that stretch reads LEVLEQLESK…RALLGKMEQM (63 aa).

This sequence belongs to the ZapB family. In terms of assembly, homodimer. The ends of the coiled-coil dimer bind to each other, forming polymers. Interacts with FtsZ.

It is found in the cytoplasm. Its function is as follows. Non-essential, abundant cell division factor that is required for proper Z-ring formation. It is recruited early to the divisome by direct interaction with FtsZ, stimulating Z-ring assembly and thereby promoting cell division earlier in the cell cycle. Its recruitment to the Z-ring requires functional FtsA or ZipA. The chain is Cell division protein ZapB from Aeromonas salmonicida (strain A449).